We begin with the raw amino-acid sequence, 276 residues long: NADPH-dependent 7-cyano-7-deazaguanine reductase (276 aa).

Val80–Ser82 is a substrate binding site. An NADPH-binding site is contributed by Ser82–Lys83. Cys183 (thioimide intermediate) is an active-site residue. Asp190 functions as the Proton donor in the catalytic mechanism. A substrate-binding site is contributed by His222 to Glu223. Arg251 to Gly252 provides a ligand contact to NADPH.

Belongs to the GTP cyclohydrolase I family. QueF type 2 subfamily. As to quaternary structure, homodimer.

The protein resides in the cytoplasm. The enzyme catalyses 7-aminomethyl-7-carbaguanine + 2 NADP(+) = 7-cyano-7-deazaguanine + 2 NADPH + 3 H(+). It functions in the pathway tRNA modification; tRNA-queuosine biosynthesis. Its function is as follows. Catalyzes the NADPH-dependent reduction of 7-cyano-7-deazaguanine (preQ0) to 7-aminomethyl-7-deazaguanine (preQ1). The chain is NADPH-dependent 7-cyano-7-deazaguanine reductase from Burkholderia orbicola (strain MC0-3).